A 136-amino-acid polypeptide reads, in one-letter code: Phospholipase A2 (136 aa).

Positions 8, 10, and 12 each coordinate Ca(2+). 5 cysteine pairs are disulfide-bonded: Cys9–Cys31, Cys30–Cys70, Cys37–Cys63, Cys61–Cys95, and Cys105–Cys117. Residue Asn16 is glycosylated (N-linked (GlcNAc...) asparagine). His34 is a catalytic residue. Residue Asp35 coordinates Ca(2+). Residue Asp64 is part of the active site.

The protein belongs to the phospholipase A2 family. It depends on Ca(2+) as a cofactor. In terms of tissue distribution, expressed by the venom gland.

Its subcellular location is the secreted. It catalyses the reaction a 1,2-diacyl-sn-glycero-3-phosphocholine + H2O = a 1-acyl-sn-glycero-3-phosphocholine + a fatty acid + H(+). PLA2 catalyzes the calcium-dependent hydrolysis of the 2-acyl groups in 3-sn-phosphoglycerides. This Bombus terrestris (Buff-tailed bumblebee) protein is Phospholipase A2.